Here is a 198-residue protein sequence, read N- to C-terminus: Large ribosomal subunit protein uL13B (198 aa).

The residue at position 2 (Ser2) is an N-acetylserine; partial. Ser43 is modified (phosphoserine). Lys176 participates in a covalent cross-link: Glycyl lysine isopeptide (Lys-Gly) (interchain with G-Cter in ubiquitin). Phosphoserine occurs at positions 181, 185, and 187.

The protein belongs to the universal ribosomal protein uL13 family. Component of the large ribosomal subunit (LSU). Mature yeast ribosomes consist of a small (40S) and a large (60S) subunit. The 40S small subunit contains 1 molecule of ribosomal RNA (18S rRNA) and 33 different proteins (encoded by 57 genes). The large 60S subunit contains 3 rRNA molecules (25S, 5.8S and 5S rRNA) and 46 different proteins (encoded by 81 genes). In terms of processing, N-terminally acetylated by acetyltransferase NatA.

It localises to the cytoplasm. In terms of biological role, component of the ribosome, a large ribonucleoprotein complex responsible for the synthesis of proteins in the cell. The small ribosomal subunit (SSU) binds messenger RNAs (mRNAs) and translates the encoded message by selecting cognate aminoacyl-transfer RNA (tRNA) molecules. The large subunit (LSU) contains the ribosomal catalytic site termed the peptidyl transferase center (PTC), which catalyzes the formation of peptide bonds, thereby polymerizing the amino acids delivered by tRNAs into a polypeptide chain. The nascent polypeptides leave the ribosome through a tunnel in the LSU and interact with protein factors that function in enzymatic processing, targeting, and the membrane insertion of nascent chains at the exit of the ribosomal tunnel. This is Large ribosomal subunit protein uL13B from Saccharomyces cerevisiae (strain ATCC 204508 / S288c) (Baker's yeast).